A 221-amino-acid chain; its full sequence is uncharacterized protein (221 aa).

Positions 1-11 are enriched in basic residues; that stretch reads MGEKSRRKGPA. 2 disordered regions span residues 1–23 and 139–169; these read MGEK…GRTC and SNFQ…SAPE. Composition is skewed to basic and acidic residues over residues 13 to 23 and 155 to 168; these read RHADGKLGRTC and DKRS…RSAP.

This is an uncharacterized protein from Homo sapiens (Human).